The sequence spans 279 residues: Small ribosomal subunit protein uS2 (279 aa).

It belongs to the universal ribosomal protein uS2 family. In terms of assembly, component of the small ribosomal subunit. Mature ribosomes consist of a small (40S) and a large (60S) subunit. The 40S subunit contains about 33 different proteins and 1 molecule of RNA (18S). The 60S subunit contains about 49 different proteins and 3 molecules of RNA (25S, 5.8S and 5S). Interacts with ribosomal protein S21.

The protein localises to the cytoplasm. Functionally, required for the assembly and/or stability of the 40S ribosomal subunit. Required for the processing of the 20S rRNA-precursor to mature 18S rRNA in a late step of the maturation of 40S ribosomal subunits. The polypeptide is Small ribosomal subunit protein uS2 (Chlamydomonas reinhardtii (Chlamydomonas smithii)).